The chain runs to 106 residues: Small ribosomal subunit protein uS10 (106 aa).

The protein belongs to the universal ribosomal protein uS10 family. Part of the 30S ribosomal subunit.

Functionally, involved in the binding of tRNA to the ribosomes. The polypeptide is Small ribosomal subunit protein uS10 (Synechococcus sp. (strain WH7803)).